The following is a 569-amino-acid chain: Matrix metalloproteinase-21 (569 aa).

A signal peptide spans 1–24 (MLAASIFRPTLLLCWLAAPWPTQP). Residues 25 to 144 (ESLFHSRDRS…GPPPRARSRR (120 aa)) constitute a propeptide that is removed on maturation. The Cysteine switch signature appears at 115–122 (PRCGVPDM). Residues 115-166 (PRCGVPDMRPPPPSAPPSPPGPPPRARSRRSPRAPLSLSRRGWQPRGYPDGG) form a disordered region. C117 contributes to the Zn(2+) binding site. Residues 122-139 (MRPPPPSAPPSPPGPPPR) are compositionally biased toward pro residues. The segment covering 147 to 156 (RAPLSLSRRG) has biased composition (low complexity). Residue H283 participates in Zn(2+) binding. E284 is an active-site residue. Residues H287 and H293 each contribute to the Zn(2+) site. Cysteines 329 and 560 form a disulfide. Hemopexin repeat units follow at residues 330-389 (EGSF…WPGI), 391-447 (THNI…FPGI), 448-496 (PSPL…FPAV), and 503-559 (FRNI…WFDV). An N-linked (GlcNAc...) asparagine glycan is attached at N372.

It belongs to the peptidase M10A family. Requires Zn(2+) as cofactor. Ca(2+) is required as a cofactor. The precursor is cleaved by a furin endopeptidase. In terms of tissue distribution, identified in fetal brain, kidney and liver. In adult tissues found primarily in ovary, kidney, liver, lung, placenta, brain and peripheral blood leukocytes. Expressed as well in various cancer cell lines.

The protein localises to the secreted. Functionally, plays a specialized role in the generation of left-right asymmetry during embryogenesis. May act as a negative regulator of the NOTCH-signaling pathway. Cleaves alpha-1-antitrypsin. This Homo sapiens (Human) protein is Matrix metalloproteinase-21 (MMP21).